The chain runs to 421 residues: Imidazolonepropionase (421 aa).

2 residues coordinate Fe(3+): histidine 81 and histidine 83. Zn(2+) contacts are provided by histidine 81 and histidine 83. Arginine 90, tyrosine 153, and histidine 186 together coordinate 4-imidazolone-5-propanoate. Tyrosine 153 serves as a coordination point for N-formimidoyl-L-glutamate. Position 251 (histidine 251) interacts with Fe(3+). Histidine 251 contributes to the Zn(2+) binding site. Glutamate 254 contributes to the 4-imidazolone-5-propanoate binding site. Fe(3+) is bound at residue aspartate 326. Zn(2+) is bound at residue aspartate 326. Asparagine 328 and glycine 330 together coordinate N-formimidoyl-L-glutamate. Serine 331 contacts 4-imidazolone-5-propanoate.

It belongs to the metallo-dependent hydrolases superfamily. HutI family. It depends on Zn(2+) as a cofactor. The cofactor is Fe(3+).

The protein localises to the cytoplasm. The enzyme catalyses 4-imidazolone-5-propanoate + H2O = N-formimidoyl-L-glutamate. Its pathway is amino-acid degradation; L-histidine degradation into L-glutamate; N-formimidoyl-L-glutamate from L-histidine: step 3/3. In terms of biological role, catalyzes the hydrolytic cleavage of the carbon-nitrogen bond in imidazolone-5-propanoate to yield N-formimidoyl-L-glutamate. It is the third step in the universal histidine degradation pathway. This is Imidazolonepropionase from Streptococcus pyogenes serotype M3 (strain SSI-1).